Here is a 236-residue protein sequence, read N- to C-terminus: Eukaryotic translation initiation factor 3 subunit J (236 aa).

The segment at 20–88 is disordered; the sequence is ANNINKWEGE…AEEEKRLANL (69 aa). The segment covering 28 to 46 has biased composition (acidic residues); the sequence is GEDDDEDVKESWEDEEEKK. Basic and acidic residues-rich tracts occupy residues 47–58 and 68–88; these read DEEKPTKTEVPV and AKLEEEERLREAEEEKRLANL.

Belongs to the eIF-3 subunit J family. In terms of assembly, component of the eukaryotic translation initiation factor 3 (eIF-3) complex. The eIF-3 complex interacts with pix.

The protein localises to the cytoplasm. In terms of biological role, component of the eukaryotic translation initiation factor 3 (eIF-3) complex, which is involved in protein synthesis of a specialized repertoire of mRNAs and, together with other initiation factors, stimulates binding of mRNA and methionyl-tRNAi to the 40S ribosome. The eIF-3 complex specifically targets and initiates translation of a subset of mRNAs involved in cell proliferation. This Drosophila willistoni (Fruit fly) protein is Eukaryotic translation initiation factor 3 subunit J.